The primary structure comprises 199 residues: 7-methyl-GTP pyrophosphatase (199 aa).

The Proton acceptor role is filled by aspartate 76.

It belongs to the Maf family. YceF subfamily. A divalent metal cation serves as cofactor.

Its subcellular location is the cytoplasm. It carries out the reaction N(7)-methyl-GTP + H2O = N(7)-methyl-GMP + diphosphate + H(+). In terms of biological role, nucleoside triphosphate pyrophosphatase that hydrolyzes 7-methyl-GTP (m(7)GTP). May have a dual role in cell division arrest and in preventing the incorporation of modified nucleotides into cellular nucleic acids. The protein is 7-methyl-GTP pyrophosphatase of Rhizobium johnstonii (strain DSM 114642 / LMG 32736 / 3841) (Rhizobium leguminosarum bv. viciae).